Consider the following 124-residue polypeptide: Cytochrome c oxidase subunit 4 isoform 1, mitochondrial (124 aa).

The residue at position 4 (Lys-4) is an N6-acetyllysine; alternate. Lys-4 bears the N6-succinyllysine; alternate mark. 2 positions are modified to phosphoserine: Ser-31 and Ser-33. The residue at position 35 (Lys-35) is an N6-acetyllysine; alternate. Residue Lys-35 is modified to N6-succinyllysine; alternate. The residue at position 42 (Lys-42) is an N6-acetyllysine.

The protein belongs to the cytochrome c oxidase IV family. In terms of assembly, component of the cytochrome c oxidase (complex IV, CIV), a multisubunit enzyme composed of 14 subunits. The complex is composed of a catalytic core of 3 subunits MT-CO1, MT-CO2 and MT-CO3, encoded in the mitochondrial DNA, and 11 supernumerary subunits COX4I, COX5A, COX5B, COX6A, COX6B, COX6C, COX7A, COX7B, COX7C, COX8 and NDUFA4, which are encoded in the nuclear genome. The complex exists as a monomer or a dimer and forms supercomplexes (SCs) in the inner mitochondrial membrane with NADH-ubiquinone oxidoreductase (complex I, CI) and ubiquinol-cytochrome c oxidoreductase (cytochrome b-c1 complex, complex III, CIII), resulting in different assemblies (supercomplex SCI(1)III(2)IV(1) and megacomplex MCI(2)III(2)IV(2)). Interacts with PHB2; the interaction decreases in absence of SPHK2. Interacts with AFG1L. Interacts with ABCB7; this interaction allows the regulation of cellular iron homeostasis and cellular reactive oxygen species (ROS) levels in cardiomyocytes. Interacts with FLVCR2; this interaction occurs in the absence of heme and is disrupted upon heme binding. Interacts with IRGC.

It is found in the mitochondrion inner membrane. It participates in energy metabolism; oxidative phosphorylation. Component of the cytochrome c oxidase, the last enzyme in the mitochondrial electron transport chain which drives oxidative phosphorylation. The respiratory chain contains 3 multisubunit complexes succinate dehydrogenase (complex II, CII), ubiquinol-cytochrome c oxidoreductase (cytochrome b-c1 complex, complex III, CIII) and cytochrome c oxidase (complex IV, CIV), that cooperate to transfer electrons derived from NADH and succinate to molecular oxygen, creating an electrochemical gradient over the inner membrane that drives transmembrane transport and the ATP synthase. Cytochrome c oxidase is the component of the respiratory chain that catalyzes the reduction of oxygen to water. Electrons originating from reduced cytochrome c in the intermembrane space (IMS) are transferred via the dinuclear copper A center (CU(A)) of subunit 2 and heme A of subunit 1 to the active site in subunit 1, a binuclear center (BNC) formed by heme A3 and copper B (CU(B)). The BNC reduces molecular oxygen to 2 water molecules using 4 electrons from cytochrome c in the IMS and 4 protons from the mitochondrial matrix. The protein is Cytochrome c oxidase subunit 4 isoform 1, mitochondrial (COX4I1) of Saimiri sciureus (Common squirrel monkey).